Consider the following 302-residue polypeptide: Protoheme IX farnesyltransferase (302 aa).

Transmembrane regions (helical) follow at residues 26-46 (VVVL…PGQV), 48-68 (WVAL…AAAL), 98-118 (VLGF…LWIN), 120-140 (LTAA…TLYL), 148-168 (IVIG…AVTG), 174-194 (ALLL…ALAV), 221-241 (ILLY…TFMG), 244-264 (LYLA…VRLL), and 280-300 (IIYL…PVWL).

This sequence belongs to the UbiA prenyltransferase family. Protoheme IX farnesyltransferase subfamily.

It localises to the cell inner membrane. It carries out the reaction heme b + (2E,6E)-farnesyl diphosphate + H2O = Fe(II)-heme o + diphosphate. Its pathway is porphyrin-containing compound metabolism; heme O biosynthesis; heme O from protoheme: step 1/1. Its function is as follows. Converts heme B (protoheme IX) to heme O by substitution of the vinyl group on carbon 2 of heme B porphyrin ring with a hydroxyethyl farnesyl side group. The sequence is that of Protoheme IX farnesyltransferase from Alkalilimnicola ehrlichii (strain ATCC BAA-1101 / DSM 17681 / MLHE-1).